The primary structure comprises 214 residues: Cytochrome b (214 aa).

Transmembrane regions (helical) follow at residues 31–51, 75–96, 111–131, and 176–196; these read FGSM…FLAI, WIMQ…YIHI, WLSG…GYVL, and FFAL…LHIL. Positions 81 and 95 each coordinate heme b. Positions 180 and 194 each coordinate heme b. A ubiquinone is bound at residue His-199.

It belongs to the cytochrome b family. In terms of assembly, the cytochrome bc1 complex contains 3 respiratory subunits (MT-CYB, CYC1 and UQCRFS1), 2 core proteins (UQCRC1 and UQCRC2) and probably 6 low-molecular weight proteins. The cofactor is heme b.

Its subcellular location is the mitochondrion inner membrane. Functionally, component of the ubiquinol-cytochrome c reductase complex (complex III or cytochrome b-c1 complex) that is part of the mitochondrial respiratory chain. The b-c1 complex mediates electron transfer from ubiquinol to cytochrome c. Contributes to the generation of a proton gradient across the mitochondrial membrane that is then used for ATP synthesis. This chain is Cytochrome b (MT-CYB), found in Crotalus atrox (Western diamondback rattlesnake).